The sequence spans 344 residues: CRISPR-associated endonuclease Cas1 2 (344 aa).

Residues E167, H235, and E250 each contribute to the Mn(2+) site.

This sequence belongs to the CRISPR-associated endonuclease Cas1 family. In terms of assembly, homodimer, forms a heterotetramer with a Cas2 homodimer. It depends on Mg(2+) as a cofactor. The cofactor is Mn(2+).

Functionally, CRISPR (clustered regularly interspaced short palindromic repeat), is an adaptive immune system that provides protection against mobile genetic elements (viruses, transposable elements and conjugative plasmids). CRISPR clusters contain spacers, sequences complementary to antecedent mobile elements, and target invading nucleic acids. CRISPR clusters are transcribed and processed into CRISPR RNA (crRNA). Acts as a dsDNA endonuclease. Involved in the integration of spacer DNA into the CRISPR cassette. In Rhodospirillum rubrum (strain ATCC 11170 / ATH 1.1.1 / DSM 467 / LMG 4362 / NCIMB 8255 / S1), this protein is CRISPR-associated endonuclease Cas1 2.